The following is a 1197-amino-acid chain: Disease resistance-like protein CSA1 (1197 aa).

Residues Pro-15–Leu-178 enclose the TIR domain. Glu-89 is a catalytic residue. Residues Arg-210–Tyr-480 form the NB-ARC domain. LRR repeat units follow at residues Leu-614–Pro-636, Asn-638–Ala-659, Thr-694–Gly-716, Leu-728–Ser-749, Asp-750–Arg-774, Val-776–Leu-796, Lys-797–Asn-819, Met-820–Arg-843, Leu-845–Lys-862, and Phe-863–Tyr-889.

It carries out the reaction NAD(+) + H2O = ADP-D-ribose + nicotinamide + H(+). TIR-NB-LRR receptor-like protein that functions in photomorphogenic development. May function downstream of phytochrome B (phyB) signaling. This Arabidopsis thaliana (Mouse-ear cress) protein is Disease resistance-like protein CSA1.